We begin with the raw amino-acid sequence, 226 residues long: Leucyl/phenylalanyl-tRNA--protein transferase (226 aa).

It belongs to the L/F-transferase family.

Its subcellular location is the cytoplasm. It carries out the reaction N-terminal L-lysyl-[protein] + L-leucyl-tRNA(Leu) = N-terminal L-leucyl-L-lysyl-[protein] + tRNA(Leu) + H(+). The catalysed reaction is N-terminal L-arginyl-[protein] + L-leucyl-tRNA(Leu) = N-terminal L-leucyl-L-arginyl-[protein] + tRNA(Leu) + H(+). The enzyme catalyses L-phenylalanyl-tRNA(Phe) + an N-terminal L-alpha-aminoacyl-[protein] = an N-terminal L-phenylalanyl-L-alpha-aminoacyl-[protein] + tRNA(Phe). Its function is as follows. Functions in the N-end rule pathway of protein degradation where it conjugates Leu, Phe and, less efficiently, Met from aminoacyl-tRNAs to the N-termini of proteins containing an N-terminal arginine or lysine. The sequence is that of Leucyl/phenylalanyl-tRNA--protein transferase from Ectopseudomonas mendocina (strain ymp) (Pseudomonas mendocina).